A 59-amino-acid polypeptide reads, in one-letter code: ATP synthase protein 8 (59 aa).

A helical transmembrane segment spans residues 7–23; that stretch reads LSPPFLYFELIGHFQVE.

It belongs to the ATPase protein 8 family. F-type ATPases have 2 components, CF(1) - the catalytic core - and CF(0) - the membrane proton channel.

Its subcellular location is the mitochondrion membrane. Functionally, mitochondrial membrane ATP synthase (F(1)F(0) ATP synthase or Complex V) produces ATP from ADP in the presence of a proton gradient across the membrane which is generated by electron transport complexes of the respiratory chain. F-type ATPases consist of two structural domains, F(1) - containing the extramembraneous catalytic core and F(0) - containing the membrane proton channel, linked together by a central stalk and a peripheral stalk. During catalysis, ATP synthesis in the catalytic domain of F(1) is coupled via a rotary mechanism of the central stalk subunits to proton translocation. Part of the complex F(0) domain. Minor subunit located with subunit a in the membrane. This is ATP synthase protein 8 (MT-ATP8) from Oenothera berteroana (Bertero's evening primrose).